A 119-amino-acid chain; its full sequence is Large ribosomal subunit protein uL18 (119 aa).

Belongs to the universal ribosomal protein uL18 family. Part of the 50S ribosomal subunit; part of the 5S rRNA/L5/L18/L25 subcomplex. Contacts the 5S and 23S rRNAs.

Functionally, this is one of the proteins that bind and probably mediate the attachment of the 5S RNA into the large ribosomal subunit, where it forms part of the central protuberance. This chain is Large ribosomal subunit protein uL18, found in Mycoplasmoides gallisepticum (strain R(low / passage 15 / clone 2)) (Mycoplasma gallisepticum).